A 178-amino-acid chain; its full sequence is Large ribosomal subunit protein bL17 (178 aa).

2 stretches are compositionally biased toward low complexity: residues Lys-123–Thr-139 and Glu-151–Ala-160. Residues Lys-123–Ala-178 are disordered. The span at Asp-161–Ala-178 shows a compositional bias: basic and acidic residues.

This sequence belongs to the bacterial ribosomal protein bL17 family. In terms of assembly, part of the 50S ribosomal subunit. Contacts protein L32.

The sequence is that of Large ribosomal subunit protein bL17 from Cutibacterium acnes (strain DSM 16379 / KPA171202) (Propionibacterium acnes).